Here is a 229-residue protein sequence, read N- to C-terminus: Urease accessory protein UreF (229 aa).

The protein belongs to the UreF family. As to quaternary structure, ureD, UreF and UreG form a complex that acts as a GTP-hydrolysis-dependent molecular chaperone, activating the urease apoprotein by helping to assemble the nickel containing metallocenter of UreC. The UreE protein probably delivers the nickel.

The protein localises to the cytoplasm. Required for maturation of urease via the functional incorporation of the urease nickel metallocenter. This chain is Urease accessory protein UreF, found in Staphylococcus saprophyticus subsp. saprophyticus (strain ATCC 15305 / DSM 20229 / NCIMB 8711 / NCTC 7292 / S-41).